Here is a 361-residue protein sequence, read N- to C-terminus: Phosphoserine aminotransferase (361 aa).

Residue Arg42 participates in L-glutamate binding. Pyridoxal 5'-phosphate is bound by residues Gly76 to Arg77, Trp102, Thr154, Asp173, and Gln196. Lys197 is modified (N6-(pyridoxal phosphate)lysine). A pyridoxal 5'-phosphate-binding site is contributed by Asn238–Thr239.

The protein belongs to the class-V pyridoxal-phosphate-dependent aminotransferase family. SerC subfamily. In terms of assembly, homodimer. Pyridoxal 5'-phosphate is required as a cofactor.

The protein resides in the cytoplasm. The enzyme catalyses O-phospho-L-serine + 2-oxoglutarate = 3-phosphooxypyruvate + L-glutamate. The catalysed reaction is 4-(phosphooxy)-L-threonine + 2-oxoglutarate = (R)-3-hydroxy-2-oxo-4-phosphooxybutanoate + L-glutamate. Its pathway is amino-acid biosynthesis; L-serine biosynthesis; L-serine from 3-phospho-D-glycerate: step 2/3. It participates in cofactor biosynthesis; pyridoxine 5'-phosphate biosynthesis; pyridoxine 5'-phosphate from D-erythrose 4-phosphate: step 3/5. In terms of biological role, catalyzes the reversible conversion of 3-phosphohydroxypyruvate to phosphoserine and of 3-hydroxy-2-oxo-4-phosphonooxybutanoate to phosphohydroxythreonine. This is Phosphoserine aminotransferase from Idiomarina loihiensis (strain ATCC BAA-735 / DSM 15497 / L2-TR).